The primary structure comprises 114 residues: Large ribosomal subunit protein bL19 (114 aa).

This sequence belongs to the bacterial ribosomal protein bL19 family.

Its function is as follows. This protein is located at the 30S-50S ribosomal subunit interface and may play a role in the structure and function of the aminoacyl-tRNA binding site. The sequence is that of Large ribosomal subunit protein bL19 from Clavibacter sepedonicus (Clavibacter michiganensis subsp. sepedonicus).